The chain runs to 271 residues: Insulin-like growth factor-binding protein 5 (271 aa).

A signal peptide spans 1–19 (MVISVVLLLLAAYAVPAQG). Residues 22–102 (SFVHCEPCDE…LHGRGVCLNE (81 aa)) form the IGFBP N-terminal domain. 6 cysteine pairs are disulfide-bonded: cysteine 26–cysteine 52, cysteine 29–cysteine 54, cysteine 37–cysteine 55, cysteine 44–cysteine 58, cysteine 66–cysteine 79, and cysteine 73–cysteine 99. A compositionally biased stretch (basic and acidic residues) spans 109 to 121 (TKIERDSREHEEP). The tract at residues 109 to 129 (TKIERDSREHEEPTTSEMAEE) is disordered. A Phosphoserine modification is found at serine 115. The Thyroglobulin type-1 domain occupies 188–262 (QGPCRRHMEA…MEYVDGDFQC (75 aa)). Intrachain disulfides connect cysteine 191–cysteine 218, cysteine 229–cysteine 240, and cysteine 242–cysteine 262.

As to quaternary structure, interacts with IGF1; this interaction enhances the growth stimulatory effects of IGF1 on fibroblasts. Interacts with CAV1; this interaction allows trafficking of IGFBP5 from the plasma membrane to the nucleus. Interacts with NCL; this interaction is necessary for IGFBP5 localization to the nucleus. In terms of tissue distribution, most abundant in kidney, uterus and gastrocnemius muscle.

It localises to the secreted. The protein localises to the cytoplasm. It is found in the nucleus. In terms of biological role, multifunctional protein that plays a critical role in regulating the availability of IGFs to their receptors and thereby regulates IGF-mediated cellular processes including proliferation, differentiation, and apoptosis in a cell-type specific manner. Increases the cell proliferation of osteoblasts, intestinal smooth muscle cells and neuroblastoma cells. Enhances adhesion and survival of epithelial cells but decreases adhesion of mesenchymal cells. Once secreted, acts as a major mediator of mTORC1-dependent feedback inhibition of IGF1 signaling. Also plays a role in the induction of extracellular matrix (ECM) production and deposition independently of its nuclear translocation and binding to IGFs. Acts itself as a growth factor that can act independently of IGFs to regulate bone formation. Acts as a ligand for the ROR1 receptor which triggers formation of ROR1/HER2 heterodimer to enhance CREB oncogenic signaling. The chain is Insulin-like growth factor-binding protein 5 (Igfbp5) from Mus musculus (Mouse).